We begin with the raw amino-acid sequence, 651 residues long: Nucleolin (651 aa).

Residues 1 to 11 (MVKLAKGAKTQ) are compositionally biased toward low complexity. The segment at 1-230 (MVKLAKGAKT…AKKTKTDTAS (230 aa)) is disordered. Residues 26–45 (EDSEEEEDMEEDDSSDEEVE) show a composition bias toward acidic residues. Positions 54 to 79 (KKTATPAKATPGKAATPGKKGATPAK) are enriched in low complexity. The span at 89–101 (SEEEEDDSDEEAE) shows a compositional bias: acidic residues. Residues 106–116 (IKNKPVAKKAV) show a composition bias toward basic residues. 3 stretches are compositionally biased toward acidic residues: residues 122–134 (SEED…ESEE), 155–168 (SEEE…DEPM), and 183–204 (AEED…EEEQ). The residue at position 155 (Ser-155) is a Phosphoserine. The segment covering 219–228 (PEAKKTKTDT) has biased composition (basic and acidic residues). 4 consecutive RRM domains span residues 233-309 (LSIF…KAMA), 325-399 (RTLF…FTGE), 415-488 (KVLV…FSQG), and 503-578 (KTLF…FAKP). The segment at 574–651 (DFAKPKGDSQ…GQGKKMRFDD (78 aa)) is disordered. Positions 585-644 (GGRGGFGRGGGFRGGRGGRGGGGGRGFGGRGGGRGRGGFGGRGGGGFRGGQGGGFRGGQG) are enriched in gly residues.

The protein resides in the nucleus. It is found in the nucleolus. Functionally, nucleolin is the major nucleolar protein of growing eukaryotic cells. It is found associated with intranucleolar chromatin and pre-ribosomal particles. It induces chromatin decondensation by binding to histone H1. It is thought to play a role in pre-rRNA transcription and ribosome assembly. The chain is Nucleolin (ncl) from Xenopus laevis (African clawed frog).